The sequence spans 434 residues: Trigger factor (434 aa).

One can recognise a PPIase FKBP-type domain in the interval Gly160 to Pro245.

The protein belongs to the FKBP-type PPIase family. Tig subfamily.

The protein localises to the cytoplasm. The catalysed reaction is [protein]-peptidylproline (omega=180) = [protein]-peptidylproline (omega=0). Its function is as follows. Involved in protein export. Acts as a chaperone by maintaining the newly synthesized protein in an open conformation. Functions as a peptidyl-prolyl cis-trans isomerase. The chain is Trigger factor from Shewanella putrefaciens (strain CN-32 / ATCC BAA-453).